We begin with the raw amino-acid sequence, 239 residues long: Endolytic peptidoglycan transglycosylase RlpA (239 aa).

A signal peptide spans 1 to 25 (MTLTRKTLFLLTAAFGTHSLQTASA). Positions 160-239 (VAENKDIFID…GMVRAVLTAG (80 aa)) constitute an SPOR domain.

Belongs to the RlpA family.

Functionally, lytic transglycosylase with a strong preference for naked glycan strands that lack stem peptides. This is Endolytic peptidoglycan transglycosylase RlpA from Neisseria meningitidis serogroup B (strain ATCC BAA-335 / MC58).